The chain runs to 123 residues: cAMP-responsive element-binding protein-like 2 (123 aa).

The segment at 1–24 is disordered; it reads MDDSKVVGGKVKKPGKRGRKPAKI. The span at 10–21 shows a compositional bias: basic residues; the sequence is KVKKPGKRGRKP. In terms of domain architecture, bZIP spans 23–86; sequence KIDLKAKLER…MAMDQGKIPS (64 aa). Residues 29-60 are basic motif; that stretch reads KLERSRQSARECRARKKLRYQYLEELVSSRER. The interval 62 to 69 is leucine-zipper; that stretch reads ICALREEL. The interval 93 to 123 is disordered; that stretch reads TGEEQNKSQQNSSRHPKAGKTDANTNSLVGN. A compositionally biased stretch (polar residues) spans 114–123; sequence DANTNSLVGN.

Belongs to the bZIP family. ATF subfamily. As to quaternary structure, interacts with CREB1; regulates CREB1 phosphorylation, stability and transcriptional activity. In terms of processing, phosphorylated by AMPK.

It localises to the nucleus. Functionally, probable regulator of CREB1 transcriptional activity which is involved in adipose cells differentiation. May also play a regulatory role in the cell cycle. The chain is cAMP-responsive element-binding protein-like 2 (Crebl2) from Rattus norvegicus (Rat).